The chain runs to 311 residues: Olfactory receptor 10G8 (311 aa).

The Extracellular segment spans residues 1-23; sequence MSNASLLTAFILMGLPHAPALDA. N-linked (GlcNAc...) asparagine glycosylation is present at asparagine 3. Residues 24-44 traverse the membrane as a helical segment; that stretch reads PLFGVFLVVYVLTVLGNLLIL. The Cytoplasmic segment spans residues 45–52; that stretch reads LVIRVDSH. Residues 53-73 form a helical membrane-spanning segment; it reads LHTTMYYFLTNLSFIDMWFST. The Extracellular portion of the chain corresponds to 74-98; it reads VTVPKLLMTLVFPSGRAISFHSCMA. Cysteine 96 and cysteine 188 are disulfide-bonded. Residues 99-119 traverse the membrane as a helical segment; the sequence is QLYFFHFLGGTECFLYRVMSC. The Cytoplasmic portion of the chain corresponds to 120 to 138; it reads DRYLAISYPLRYTSMMTGR. Residues 139 to 159 traverse the membrane as a helical segment; that stretch reads SCTLLATSTWLSGSLHSAVQA. At 160-196 the chain is on the extracellular side; sequence ILTFHLPYCGPNWIQHYLCDAPPILKLACADTSAIET. The chain crosses the membrane as a helical span at residues 197 to 216; it reads VIFVTVGIVASGCFVLIVLS. Topologically, residues 217–236 are cytoplasmic; it reads YVSIVCSILRIRTSEGKHRA. Residues 237–257 form a helical membrane-spanning segment; the sequence is FQTCASHCIVVLCFFGPGLFI. The Extracellular segment spans residues 258–268; that stretch reads YLRPGSRKAVD. The chain crosses the membrane as a helical span at residues 269–289; sequence GVVAVFYTVLTPLLNPVVYTL. Topologically, residues 290 to 311 are cytoplasmic; that stretch reads RNKEVKKALLKLKDKVAHSQSK.

Belongs to the G-protein coupled receptor 1 family.

The protein localises to the cell membrane. Odorant receptor. This Homo sapiens (Human) protein is Olfactory receptor 10G8 (OR10G8).